The following is a 363-amino-acid chain: NADH-quinone oxidoreductase subunit H (363 aa).

The next 10 membrane-spanning stretches (helical) occupy residues V29–W49, G62–F82, F96–F116, V127–G147, A163–A183, F202–V222, E238–L257, W278–W298, K299–F319, and F339–I359.

It belongs to the complex I subunit 1 family. In terms of assembly, NDH-1 is composed of 14 different subunits. Subunits NuoA, H, J, K, L, M, N constitute the membrane sector of the complex.

Its subcellular location is the cell inner membrane. It carries out the reaction a quinone + NADH + 5 H(+)(in) = a quinol + NAD(+) + 4 H(+)(out). In terms of biological role, NDH-1 shuttles electrons from NADH, via FMN and iron-sulfur (Fe-S) centers, to quinones in the respiratory chain. The immediate electron acceptor for the enzyme in this species is believed to be ubiquinone. Couples the redox reaction to proton translocation (for every two electrons transferred, four hydrogen ions are translocated across the cytoplasmic membrane), and thus conserves the redox energy in a proton gradient. This subunit may bind ubiquinone. The sequence is that of NADH-quinone oxidoreductase subunit H from Xanthomonas oryzae pv. oryzae (strain MAFF 311018).